A 322-amino-acid polypeptide reads, in one-letter code: MSRQPPIRIGARGSKLSLAQSGLMQARIAHALGVPAGASKDEIEAAAPLIPIVTSGDRIQDRRLMEIGGKGLFTKEIEEALLDGRIDCAVHSLKDMPAELPPGLVLAATPEREDPRDAFISHVCERLEDLPKGARLGTASLRRQAQALHVRPDLEIVMLRGNVDTRLAKLERGEADAILLAQSGLNRLGLGHLTRSWLDPDACPPAPGQGALVIETRAEDIGAPWLEAVRCRQTTIAVAAERGALLALEGSCRTAIGARAILDGARLSMIVEALTPDGAQRFRREGDITLTGADDIAEARAFGLTLGAEVRAAGGDAIILPE.

C252 carries the S-(dipyrrolylmethanemethyl)cysteine modification.

This sequence belongs to the HMBS family. As to quaternary structure, monomer. Dipyrromethane serves as cofactor.

It catalyses the reaction 4 porphobilinogen + H2O = hydroxymethylbilane + 4 NH4(+). The protein operates within porphyrin-containing compound metabolism; protoporphyrin-IX biosynthesis; coproporphyrinogen-III from 5-aminolevulinate: step 2/4. Its function is as follows. Tetrapolymerization of the monopyrrole PBG into the hydroxymethylbilane pre-uroporphyrinogen in several discrete steps. The protein is Porphobilinogen deaminase of Caulobacter vibrioides (strain ATCC 19089 / CIP 103742 / CB 15) (Caulobacter crescentus).